A 4965-amino-acid chain; its full sequence is MSIMSSINECLATCKVLISPSMLPLHVLLSVEQVESTVVEIVERSLEFCLLYLEKSSYACEDYGLLNEVAYFMECVLLRGTPSKVYSLEPSVVNDVIEQWSSVQVDSERISPQEKYFCYLKGFNCSNSGDDLQRFRLTLSPECLQQDYVIAENTESSHTASPNGMVSIAQHFAVVHLHCIPVLLTLVQKLCQSPALDVIEDTNFNMRLSFGQRILKLVHGLAMEFPCDASDAMMLCSVARCTDSLPVLFKLKFKFANHDRVFSGDGVGTVLLQILDEFLQLIHIIFCNSDICCTVQVCILASLLEIFSPEKWKYDRSAACLMPPLVYSPHIVQYVLKLLNDTKRWTSRVDRDRPGKDVLGYSCNSETDGLSCHARSKKVPLLKKYTSEEYLQLIFPSEEQWLDDLVHLIFFLHEEGVKSMPLLEKPQMSCTKQVTLSELESVASHEEEALFGNLFAEARSTGVADSVEQPISLGSGPSSSQHGPIQLAADLICFMKMSIFSPEWCTAIYVDACRKFHSNHLEQFLSILQCPAFCSDESIATTSLSEVNSLHINTACFELLQMFLISHECPASLREDLVDKVFNAENGMYTYNNYTLALVARAIISGASSIYNLGRKVFVQENETASTWSKCIWTHKMGFTPVKTPACLAAYVVVSGNTSVMVAYEVKIQNEGDILLKEGQSRSMNDYLPSFTAEVVEGIFADTVKEYASTSSLFPQLIDVTPAHAEIYFDKSALEALGLNFANLGSNISEILGVWKGRKAEVAEDLIAERYLFLICWSTLSGIGYSGGYEGLLNPDFADVNFFISFALSVSDDASSLLDANLPSVIFGFLKLLQSEILCGPSVLESWDFLRKGAWLSLILSLINTGFWGHQTSGKPDVDLQGKQVVQDAEIFGKSLLTFISENSGHCLHVLSSLLETYLHAFKEAFISFVVEKGRVCEDHCYPSWLLKHSAFDKSKHPLLFEKVGSNIGMLEPICDLSSRIDRVATKLGDGRKEYFLLKCLLHGFPVNSASNNSAILSCVLVINEIIYMLNGCIKIMQPNDRDLVDVGVISKLLSMIMTIKSDGMFTSIHKLCDSIFMSLIDQKDDLAGYSDLFVLKQLEGYLADINSKEIMDNEVKEIIVFTIVDLVEDLRSKTNVFKFFLGEAEGAPERANSLFALEQADMSVFIDVLDKCQSEQVNLKILNLFTDILGDGLCPDLKQKLQHKFIGMDVSCFSSWLEFRTLGHSMKIESTNSTTSGPTALRELTMDFLMRLTCPSSETLAKELQHHLFDSMLLLLDKAFMSCDLQIVKAHFHFIAQLSTDESHFKELFEKTLKLMENMVGNEGLLHTLKFLFTCVESVFGDAGSNRSALKRLSSKSSGNSFGSGSLIPKQLKNSDSLVLRTNQESNSTVDCDASSGEEDEDDGTSDGELVSIDRDEEEDGNSERALATKVCTFTSSGSNFMEQHWYFCYTCDLTVSKGCCSVCAKVCHQGHRVVYSRSSRFFCDCGAGGVRGSSCQCLKPRKFTGTSSVSPPVTSSFQPILPYHEDVEPVADSGSDFEDDISTEAENCIKLSVPKGFSDELPVFLKNLDVEVRMLELCKKLLPMILSQRELNLLKDRKVFLGGEMPMSQASDIFQLKKAFKSGSLDLKIKADYPNSRELKSHLANGSLTKSLLSISIRGKLAVGEGDKVAIFDVGQIIGQPTAAPITADKTNVKPLSRNIVRFEIVHLIFNPLVEHYLSVAGYEDCQVLTLNSRGEVTDRLAIELALQGAYIRCVEWVPGSQVQLMVVTNKFVKIYDLSQDNISPLHYFTVADDIIVDATLVPSSMGKLVLLVLSEGGLLYRLNVALAGDVGAKTLTDTVLVKDAVSMHKGLSLYFSSTYRLLFVSHQDGTTYMGRLDGDSSSITELSYICENDQDGKSKPAGLYRWRELIAGSGALACLSKFKSNSPLAVSLGPHELFAHNMRHASGSNAPVVGIAAYKPLSKDKAHCLLLYDDGSLNIYSHTPNGSDSSTTLTAEQTKKLGSSILSSRAYAGTKPEFPLDFFEKTTCITCDVKFNSDTTKSSDSESIKQRLSSDDGYLESLTSAGFKVTISNPNPDIVMVGCRIHVGNTSASNIPSEITIFHRVIKLDEGMRSWYDIPFTTAESLLADEEFTIVVGRTFDGSSIPRIDSIEVYGRAKDEFGWKEKMDAALDMEAHVLGGSSASGKSGKKAQTMQAAPIQEQVLADALRILSRIYLLCQPGFCTDTIDADMELNNLKCRSLLETIFQSDREPLLHSAACRVLQAVFPKKEIYYHVKDTMRLLGVIKSLPSITSRIGVGGAASSWVTKEFIAQIHTVSKVAVHRKSNLASFLETHGTELVDGLMQVFWGILDLDRPDTQRINSLVVPCVEFIYSYAECLALHSNEKSGVSVAPAVALLKKLLFAPYEAVQTSSSLAISSRFLQVPFPKQTMIANDDAPDNHAKASAASNSTTGNAQVMIEEDPATSSVQYCCDGCSTVPILRRRWHCNICPDFDLCETCYEILDADRLPAPHSRDHPMSAIPIELDTFGGEGNEIHFSVDELTDSSVLQAPADRTIQTSPSSIHVLDASESVDFHGSMTEQRTVSISASKRAINSLLLSRLIEELSGWMETTAGTRAIPIMQLFYRLSSAVGGPFMDSTKPENLDLEKFVKWLIDEINISKPFPAKTRCSFGEVSILVFMFFTLMFRNWHQPGTDGSHSKSGGSSDLTEKGPVHVQVSTTTLQSSNDDHDKNEFASQLIRACSALRQQSFLNYLMDILQQLVHVFKSSSINGEGGSSSSGCGSLLTVRRELPAGNFSPFFSDSYAKSHPTDLFMDYYKLLLENTFRLVYSMVRPEKEKSADKDKSCKVPNTKDLKLDGYQDVLCSYISNAHTTFVRRYARRLFLHLCGSKTHYYSVRDSWQYSHEVKKLHKIINKSGGFRNPVPYERSVKLIKCLSTLCDVAASRPRNWQKFCLKHTDLLPFLMDNFYYFSEECIVQTLKLLNLAFYSGKDANHNAQKTESGDIGSSTRTGSQSSDSKKKRKGDDSSEGSSEKSCMDMEQAVVVFTGKDGDVLKRFVDTFLLEWNSTSVRHEAKSVLFGLWYHAKSSFKENMLTTLLQKVKYLPMYGQNIIEYTDLMTCLLGKANDSTAKQSDTELLNKCLTSDVVSCIFDTLHSQNELLANHPNSRIYNTLSCLVEFDGYYLESEPCVTCSCPDVPYSRMKLESLKSETKFTDNRIIVKCTGSFTIQSVTMNVYDARKSKSVKVLNLYYNNRPVTDLSELKNNWSLWKRAKSCHLTFNQTELKVEFPIPITACNFMIELDSFYENLQASSLESLQCPRCSRSVTDKHGICSNCHENAYQCRQCRNINYENLDSFLCNECGYSKYGRFEFHFMAKPSFSFDNMENDDDMRKGLTAIESESENAHRRYQQLMGFKKPLIKLVSSIGEQEIDSQQKDAVQQMMVSLPGPTGKVNRKIALLGVLYGEKCKAAFDSVSKSVQTLQGLRRVLMTYLHQKNSNDTDALPACSIPRSPSSCYGCSTTFVTQCLELLQVLSKHATSRKQLVSAGILSELFENNIHQGPRTARTLARAVLSSFSEGDADAVQELNNLIQKKVMYCLEHHRSMDISQSTREELLLLSETCALVDEFWEARLRVAFQLLFSSIKVGAKHPAISEHIILPCLRIISQACTPPKSDSGEKEPGMGKSSLMQAKNDDTVGHSVTNLSTSKTQSELSGKIPDGSRRRQDISLLSYSEWESGASYLDFVRRQYKVSQAVKGLQKTRHDSQKSDYLVLKYGLRWKRRACRKSSKGDFSKFALGSWVSDLILSSCSQSIRSEICTLISLLCPSNSSRQFQLLNLLMSLLPRTLSAGESAAEYFELLGTMIDTEASRLFLTVRGCLTTLCSLITKEVSNVESQERSLSIDISQGFILHKLVELLNKFLEIPNIRARFMSDNLLSDVLEAFLVIRGLVVQKTKLINDCNRLLKDLLDSLLVESTANKRQFIRACISGLQKHVKEKKRRTSLFILEQLCNLICPVKPEPVYLLILNKAHTQEEFIRGSMTRNPYSSAEIGPLMRDVKNKICHQLDLIGLLEDDYGMELLVAGNIISLDLSISQVYEQVWRKHHGQTQHSLSNASQLSAAASSVRDCPPMTVTYRLQGLDGEATEPMIKELEDEREESQDPEVEFAIAGAVRECGGLEIILSMIQSLREDELRSNQEELGSVLNLLKYCCKIRENRCALLRLGALGLLLETARRAFSVDAMEPAEGILLIVESLTMEANESDISIAQSVFTTTTEETGAGEEAKKIVLMFLERLCPPDGAKKSNKQQRNEEMVARILPNLTYGEPAAMEALVLHFEPYLMNWSEFDQLQKQHEENPKDETLSKNASMQRSAVENFVRVSESLKTSSCGERLKEIILEKGITKAAVGHLRESFASAGQASFRTSAEWTVGLKLPSIPLILSMLKGLAKGDLPTQKCVDEEDILPLLHALEGVPGENEIGARAENLLDTLANKENNGDGFLAEKIQELRHATRDEMRRRALKKREMLLQGLGMRQEFASDGGRRIVVSQPIIEGLDDVEEEEDGLACMVCREGYTLRPTDMLGVYAFSKRVNLGATSSGSGRGDCVYTTVSHFNIIHYQCHQEAKRADAALKNPKKEWDGATLRNNETLCNCIFPLRGPSVPPGQYTRCLDQYWDQLNSLGRADGSRLRLLTYDIVLMLARFATGASFSTDCKGGGRESNSRFLPFMIQMASHLVDGSANQQRHVMAKAVTSYLSSSPSTPESPVRLSALSGARGGSGSSEETVQFMMVNSLLSESYESWLQHRPAFLQRGIYHAYMQHKHGRSTLKLSADTSSSAVRSDEGSSADSNDSKRLFAIVQPMLVYTGLIEQLQQFFKKGKSSGTQKVGEKDGSSGGNLEAWEIMMKEKLGNMKEMLGFSKDVLSWLEDMTSSEDLQEAFDVMGALPDVFSGGHTTCEDFVRAIIHGAKS.

Helical transmembrane passes span 289–309 (SDIC…IFSP), 646–666 (ACLA…AYEV), and 772–792 (LFLI…YEGL). Residues 1383–1425 (TNQESNSTVDCDASSGEEDEDDGTSDGELVSIDRDEEEDGNSE) are disordered. Acidic residues predominate over residues 1397–1407 (SGEEDEDDGTS). A UBR-type zinc finger spans residues 1431 to 1502 (KVCTFTSSGS…RGSSCQCLKP (72 aa)). The tract at residues 2437-2456 (DDAPDNHAKASAASNSTTGN) is disordered. A compositionally biased stretch (low complexity) spans 2445 to 2456 (KASAASNSTTGN). A ZZ-type zinc finger spans residues 2469–2528 (SVQYCCDGCSTVPILRRRWHCNICPDFDLCETCYEILDADRLPAPHSRDHPMSAIPIELD). Zn(2+)-binding residues include Cys-2474, Cys-2477, Cys-2489, Cys-2492, Cys-2498, Cys-2501, His-2514, and His-2518. The disordered stretch occupies residues 2997-3037 (NAQKTESGDIGSSTRTGSQSSDSKKKRKGDDSSEGSSEKSC). Low complexity predominate over residues 3007-3017 (GSSTRTGSQSS). A compositionally biased stretch (basic and acidic residues) spans 3024–3037 (KGDDSSEGSSEKSC). The segment at 3319–3359 (CPRCSRSVTDKHGICSNCHENAYQCRQCRNINYENLDSFLC) adopts an MYND-type; degenerate zinc-finger fold. Residues 3672–3721 (PKSDSGEKEPGMGKSSLMQAKNDDTVGHSVTNLSTSKTQSELSGKIPDGS) form a disordered region. The segment covering 3699–3713 (HSVTNLSTSKTQSEL) has biased composition (polar residues). The tract at residues 4433 to 4963 (PSIPLILSML…DFVRAIIHGA (531 aa)) is UBR4 E3 catalytic module. The HemiRING-type zinc-finger motif lies at 4562–4681 (GLACMVCREG…WDQLNSLGRA (120 aa)). Cys-4565, Cys-4568, His-4615, and Cys-4618 together coordinate Zn(2+). In terms of domain architecture, UZI spans 4684–4963 (SRLRLLTYDI…DFVRAIIHGA (280 aa)). The segment covering 4753–4770 (SSSPSTPESPVRLSALSG) has biased composition (low complexity). 2 disordered regions span residues 4753–4778 (SSSP…SGSS) and 4822–4846 (STLK…ADSN). Residues 4824–4845 (LKLSADTSSSAVRSDEGSSADS) show a composition bias toward polar residues.

The protein belongs to the UBR4 family.

Its subcellular location is the membrane. In terms of biological role, required for auxin efflux and polar auxin transport (PAT) influencing auxin-mediated developmental responses (e.g. cell elongation, apical dominance, lateral root production, inflorescence architecture, general growth and development). In Oryza sativa subsp. japonica (Rice), this protein is Auxin transport protein BIG.